Reading from the N-terminus, the 542-residue chain is Protein phosphatase 1G (542 aa).

Glycine 2 is lipidated: N-myristoyl glycine. At arginine 22 the chain carries Omega-N-methylarginine. The region spanning 26-502 is the PPM-type phosphatase domain; it reads PYGFSAMQGW…DNMTCIIICF (477 aa). Mn(2+) contacts are provided by aspartate 60 and glycine 61. 2 disordered regions span residues 118 to 139 and 162 to 325; these read AGRP…DVDN and QNCQ…SDSG. Threonine 122 is modified (phosphothreonine). Composition is skewed to acidic residues over residues 123-139 and 259-309; these read EDED…DVDN and DSED…DEEM. An N6-acetyllysine modification is found at lysine 380. Mn(2+) is bound by residues aspartate 438 and aspartate 493. The segment at 510–542 is disordered; sequence LQPESGKRKLEEALSTEGAEENGNSDKKKAKRD. Residue serine 524 is modified to Phosphoserine.

Belongs to the PP2C family. Interacts with NOL3; may dephosphorylate NOL3. Mg(2+) serves as cofactor. It depends on Mn(2+) as a cofactor.

It is found in the cytoplasm. Its subcellular location is the membrane. The catalysed reaction is O-phospho-L-seryl-[protein] + H2O = L-seryl-[protein] + phosphate. It carries out the reaction O-phospho-L-threonyl-[protein] + H2O = L-threonyl-[protein] + phosphate. In Rattus norvegicus (Rat), this protein is Protein phosphatase 1G.